The following is a 381-amino-acid chain: Putative acyl-CoA dehydrogenase YdbM (381 aa).

FAD is bound by residues 158–160 (FTT) and 337–341 (RIVGA).

Belongs to the acyl-CoA dehydrogenase family. Requires FAD as cofactor.

The polypeptide is Putative acyl-CoA dehydrogenase YdbM (ydbM) (Bacillus subtilis (strain 168)).